A 101-amino-acid chain; its full sequence is Small ribosomal subunit protein uS10 (101 aa).

The protein belongs to the universal ribosomal protein uS10 family. As to quaternary structure, part of the 30S ribosomal subunit.

In terms of biological role, involved in the binding of tRNA to the ribosomes. The chain is Small ribosomal subunit protein uS10 from Corynebacterium jeikeium (strain K411).